A 396-amino-acid chain; its full sequence is Elongation factor Tu (396 aa).

The 197-residue stretch at 10 to 206 (KPHVNIGTIG…AVDESVPDPV (197 aa)) folds into the tr-type G domain. Positions 19–26 (GHVDHGKT) are G1. GTP is bound at residue 19–26 (GHVDHGKT). Thr-26 contacts Mg(2+). A G2 region spans residues 62–66 (GITIN). The segment at 83-86 (DAPG) is G3. GTP is bound by residues 83-87 (DAPGH) and 138-141 (NKSD). Residues 138 to 141 (NKSD) are G4. The G5 stretch occupies residues 176 to 178 (SGL).

Belongs to the TRAFAC class translation factor GTPase superfamily. Classic translation factor GTPase family. EF-Tu/EF-1A subfamily. As to quaternary structure, monomer.

The protein resides in the cytoplasm. The catalysed reaction is GTP + H2O = GDP + phosphate + H(+). Functionally, GTP hydrolase that promotes the GTP-dependent binding of aminoacyl-tRNA to the A-site of ribosomes during protein biosynthesis. The sequence is that of Elongation factor Tu from Pseudarthrobacter chlorophenolicus (strain ATCC 700700 / DSM 12829 / CIP 107037 / JCM 12360 / KCTC 9906 / NCIMB 13794 / A6) (Arthrobacter chlorophenolicus).